The primary structure comprises 1579 residues: Eukaryotic translation initiation factor 4 gamma 3 (1579 aa).

Disordered regions lie at residues methionine 1–valine 35 and threonine 128–leucine 326. A compositionally biased stretch (low complexity) spans proline 10–proline 25. The span at asparagine 26 to valine 35 shows a compositional bias: polar residues. The PABPC1-binding stretch occupies residues proline 134–glycine 162. Pro residues predominate over residues proline 167–glutamine 183. A Phosphothreonine modification is found at threonine 168. Residues serine 230, serine 232, and serine 267 each carry the phosphoserine modification. Positions serine 266–leucine 292 are enriched in low complexity. The span at alanine 295 to aspartate 308 shows a compositional bias: basic and acidic residues. A compositionally biased stretch (polar residues) spans proline 315–leucine 326. Phosphoserine is present on residues serine 436, serine 470, serine 472, and serine 490. Residues arginine 454–serine 470 are compositionally biased toward basic and acidic residues. Disordered regions lie at residues arginine 454–glycine 615, arginine 681–glutamate 706, and alanine 724–isoleucine 744. The span at glutamate 471–alanine 480 shows a compositional bias: acidic residues. Residues aspartate 481–proline 501 show a composition bias toward polar residues. 2 stretches are compositionally biased toward basic and acidic residues: residues lysine 506–aspartate 515 and serine 549–glutamate 563. Residues serine 589 to glycine 598 show a composition bias toward low complexity. The span at glutamate 606–glycine 615 shows a compositional bias: basic and acidic residues. The segment at glutamate 614–leucine 625 is EIF4E-binding. Residues valine 694–threonine 1014 are eIF3/EIF4A-binding. HEAT repeat units lie at residues aspartate 740–aspartate 778, threonine 779–valine 826, asparagine 827–leucine 900, threonine 901–lysine 939, and alanine 940–tryptophan 979. An MIF4G domain is found at phenylalanine 750–asparagine 978. Over residues lysine 855–aspartate 871 the composition is skewed to basic and acidic residues. The segment at lysine 855–glutamate 875 is disordered. A coiled-coil region spans residues lysine 989–arginine 1018. Disordered regions lie at residues valine 1009–lysine 1037 and leucine 1067–glutamate 1214. The span at leucine 1086–proline 1098 shows a compositional bias: low complexity. Serine 1150 carries the post-translational modification Phosphoserine; by CaMK1. 2 stretches are compositionally biased toward basic and acidic residues: residues serine 1150 to glutamate 1169 and aspartate 1179 to lysine 1197. Residues leucine 1154–glycine 1176 are a coiled coil. Residue serine 1212 is modified to Phosphoserine. In terms of domain architecture, MI spans glutamate 1215 to serine 1337. Residues serine 1406–isoleucine 1438 adopt a coiled-coil conformation. The region spanning leucine 1410–asparagine 1579 is the W2 domain. Residues leucine 1427–asparagine 1579 are EIF4A-binding. The interval phenylalanine 1565–asparagine 1579 is necessary but not sufficient for MKNK1-binding.

This sequence belongs to the eukaryotic initiation factor 4G family. Interacts with EIF4A, EIF4E, eIF3 and PABPC1. Part of a complex with EIF4E. eIF4F is a multi-subunit complex, the composition of which varies with external and internal environmental conditions. It is composed of at least EIF4A, EIF4E and EIF4G1/EIF4G3. EIF4G1/EIF4G3 interacts through its C-terminus with the serine/threonine kinases MKNK1, and with MKNK2. Appears to act as a scaffold protein, holding these enzymes in place to phosphorylate eIF4E. Non-phosphorylated EIF4EBP1 competes with EIF4G1/EIFG3 to interact with EIF4E; insulin stimulated MAP-kinase (MAPK1 and MAPK3) phosphorylation of EIF4EBP1 causes dissociation of the complex allowing EIF4G1/EIF4G3 to bind and consequent initiation of translation. EIF4G1/EIF4G3 interacts with PABPC1 to bring about circularization of the mRNA. Interacts with FXR1; promoting translation of FXR1 target mRNAs.

Functionally, component of the protein complex eIF4F, which is involved in the recognition of the mRNA cap, ATP-dependent unwinding of 5'-terminal secondary structure and recruitment of mRNA to the ribosome. Functional homolog of EIF4G1. This chain is Eukaryotic translation initiation factor 4 gamma 3 (Eif4g3), found in Mus musculus (Mouse).